The chain runs to 157 residues: Small ribosomal subunit protein uS7 (157 aa).

This sequence belongs to the universal ribosomal protein uS7 family. As to quaternary structure, part of the 30S ribosomal subunit. Contacts proteins S9 and S11.

Its function is as follows. One of the primary rRNA binding proteins, it binds directly to 16S rRNA where it nucleates assembly of the head domain of the 30S subunit. Is located at the subunit interface close to the decoding center, probably blocks exit of the E-site tRNA. The protein is Small ribosomal subunit protein uS7 of Opitutus terrae (strain DSM 11246 / JCM 15787 / PB90-1).